The primary structure comprises 59 residues: Small ribosomal subunit protein eS30 (59 aa).

The tract at residues 1–35 is disordered; it reads KVHGSLARAGKVRGQTPKVAKQEKKKKKTGRAKRR. The segment covering 23 to 35 has biased composition (basic residues); that stretch reads EKKKKKTGRAKRR. N6-succinyllysine is present on lysine 51.

It belongs to the eukaryotic ribosomal protein eS30 family.

The chain is Small ribosomal subunit protein eS30 (Fau) from Mus spicilegus (Steppe mouse).